The following is a 289-amino-acid chain: ATP synthase gamma chain (289 aa).

This sequence belongs to the ATPase gamma chain family. F-type ATPases have 2 components, CF(1) - the catalytic core - and CF(0) - the membrane proton channel. CF(1) has five subunits: alpha(3), beta(3), gamma(1), delta(1), epsilon(1). CF(0) has three main subunits: a, b and c.

The protein resides in the cell inner membrane. In terms of biological role, produces ATP from ADP in the presence of a proton gradient across the membrane. The gamma chain is believed to be important in regulating ATPase activity and the flow of protons through the CF(0) complex. This chain is ATP synthase gamma chain, found in Leptospira biflexa serovar Patoc (strain Patoc 1 / ATCC 23582 / Paris).